We begin with the raw amino-acid sequence, 155 residues long: Interleukin-2 (155 aa).

A signal peptide spans Met-1–Gly-20. Residue Thr-23 is glycosylated (O-linked (GalNAc...) threonine). Cys-79 and Cys-127 are joined by a disulfide.

Belongs to the IL-2 family.

The protein localises to the secreted. Its function is as follows. Cytokine produced by activated CD4-positive helper T-cells and to a lesser extend activated CD8-positive T-cells and natural killer (NK) cells that plays pivotal roles in the immune response and tolerance. Binds to a receptor complex composed of either the high-affinity trimeric IL-2R (IL2RA/CD25, IL2RB/CD122 and IL2RG/CD132) or the low-affinity dimeric IL-2R (IL2RB and IL2RG). Interaction with the receptor leads to oligomerization and conformation changes in the IL-2R subunits resulting in downstream signaling starting with phosphorylation of JAK1 and JAK3. In turn, JAK1 and JAK3 phosphorylate the receptor to form a docking site leading to the phosphorylation of several substrates including STAT5. This process leads to activation of several pathways including STAT, phosphoinositide-3-kinase/PI3K and mitogen-activated protein kinase/MAPK pathways. Functions as a T-cell growth factor and can increase NK-cell cytolytic activity as well. Promotes strong proliferation of activated B-cells and subsequently immunoglobulin production. Plays a pivotal role in regulating the adaptive immune system by controlling the survival and proliferation of regulatory T-cells, which are required for the maintenance of immune tolerance. Moreover, participates in the differentiation and homeostasis of effector T-cell subsets, including Th1, Th2, Th17 as well as memory CD8-positive T-cells. The polypeptide is Interleukin-2 (IL2) (Capra hircus (Goat)).